Consider the following 90-residue polypeptide: Barrier-to-autointegration factor (90 aa).

Phosphoserine is present on residues S2 and S3. A Phosphothreonine modification is found at T4. S5 is modified (phosphoserine).

The protein belongs to the BAF family. In terms of assembly, homodimer.

It localises to the nucleus. Its subcellular location is the chromosome. It is found in the nucleus envelope. The protein resides in the cytoplasm. Functionally, non-specific DNA-binding protein that plays key roles in mitotic nuclear reassembly, chromatin organization, DNA damage response, gene expression and intrinsic immunity against foreign DNA. Contains two non-specific double-stranded DNA (dsDNA)-binding sites which promote DNA cross-bridging. Plays a key role in nuclear membrane reformation at the end of mitosis by driving formation of a single nucleus in a spindle-independent manner. Transiently cross-bridges anaphase chromosomes via its ability to bridge distant DNA sites, leading to the formation of a dense chromatin network at the chromosome ensemble surface that limits membranes to the surface. Also acts as a negative regulator of innate immune activation by restricting CGAS activity toward self-DNA upon acute loss of nuclear membrane integrity. Outcompetes CGAS for DNA-binding, thereby preventing CGAS activation and subsequent damaging autoinflammatory responses. Also involved in DNA damage response; acts by inhibiting the ADP-ribosyltransferase activity of PARP1. Involved in the recognition of exogenous dsDNA in the cytosol: associates with exogenous dsDNA immediately after its appearance in the cytosol at endosome breakdown and is required to avoid autophagy. The polypeptide is Barrier-to-autointegration factor (banf1) (Danio rerio (Zebrafish)).